The following is a 194-amino-acid chain: ATP-dependent Clp protease proteolytic subunit (194 aa).

The active-site Nucleophile is Ser98. His123 is an active-site residue.

It belongs to the peptidase S14 family. In terms of assembly, fourteen ClpP subunits assemble into 2 heptameric rings which stack back to back to give a disk-like structure with a central cavity, resembling the structure of eukaryotic proteasomes.

Its subcellular location is the cytoplasm. The enzyme catalyses Hydrolysis of proteins to small peptides in the presence of ATP and magnesium. alpha-casein is the usual test substrate. In the absence of ATP, only oligopeptides shorter than five residues are hydrolyzed (such as succinyl-Leu-Tyr-|-NHMec, and Leu-Tyr-Leu-|-Tyr-Trp, in which cleavage of the -Tyr-|-Leu- and -Tyr-|-Trp bonds also occurs).. Its function is as follows. Cleaves peptides in various proteins in a process that requires ATP hydrolysis. Has a chymotrypsin-like activity. Plays a major role in the degradation of misfolded proteins. The protein is ATP-dependent Clp protease proteolytic subunit of Syntrophus aciditrophicus (strain SB).